Consider the following 622-residue polypeptide: Iron transport multicopper oxidase FET5 (622 aa).

Residues Met1–Ala18 form the signal peptide. Over Lys19–Leu573 the chain is Extracellular. Residue Asn24 is glycosylated (N-linked (GlcNAc...) asparagine). 2 Plastocyanin-like domains span residues Ile43–His146 and Asn192–Arg301. Cu cation-binding residues include His79 and His81. 2 N-linked (GlcNAc...) asparagine glycosylation sites follow: Asn86 and Asn115. Positions 128 and 130 each coordinate Cu cation. N-linked (GlcNAc...) asparagine glycans are attached at residues Asn196, Asn200, Asn246, Asn295, and Asn364. Residues Gly392–Ala514 enclose the Plastocyanin-like 3 domain. His418, His421, and His423 together coordinate Cu cation. Residue Asn455 is glycosylated (N-linked (GlcNAc...) asparagine). His496, Cys497, His498, and His502 together coordinate Cu cation. Residues Ala574–Ile594 traverse the membrane as a helical segment. At Gly595–Gly622 the chain is on the cytoplasmic side.

Belongs to the multicopper oxidase family. In terms of assembly, interacts with FTH1. Cu cation serves as cofactor.

Its subcellular location is the cell membrane. In terms of biological role, iron transport multicopper oxidase, which is required for Fe(2+) high affinity uptake. May be required to oxidize Fe(2+) and release it from the transporter. Essential component of copper-dependent iron transport. This chain is Iron transport multicopper oxidase FET5 (FET5), found in Saccharomyces cerevisiae (strain ATCC 204508 / S288c) (Baker's yeast).